Consider the following 1052-residue polypeptide: SE-cephalotoxin (1052 aa).

The N-terminal stretch at 1–21 (MMGTSRCVILLFALLLWAANA) is a signal peptide. A propeptide spanning residues 22–29 (APPEIHTT) is cleaved from the precursor. N-linked (GlcNAc...) asparagine glycosylation occurs at Asn-41. Positions 130-194 (TGVNRKLDQI…DMNKRRLMAE (65 aa)) form a coiled coil. An N-linked (GlcNAc...) asparagine glycan is attached at Asn-353. In terms of domain architecture, EGF-like spans 460–497 (PGNPCNHGCNGHGECKVVPYTDQFQCFCHGNYEGKMCQ). Cystine bridges form between Cys-464/Cys-474, Cys-468/Cys-485, and Cys-487/Cys-496. Residues Asn-576 and Asn-715 are each glycosylated (N-linked (GlcNAc...) asparagine). The region spanning 709 to 769 (TSCPPLNVTH…QWSATPKCES (61 aa)) is the Sushi domain. Cystine bridges form between Cys-711-Cys-752, Cys-739-Cys-767, Cys-780-Cys-814, Cys-784-Cys-820, Cys-795-Cys-804, Cys-829-Cys-847, and Cys-841-Cys-858. The TSP type-1 domain maps to 768–821 (ESSWSRWSKWSACASTCGNATQSRRRRCLGQSESEKCIGPSKQVRKCFVEDCCQ). Residue Asn-786 is glycosylated (N-linked (GlcNAc...) asparagine). Residues 819-859 (CCQEKYGKFKCDNNKCISLSRVCDGNDDCRNAEDESKSRCK) enclose the LDL-receptor class A domain.

As to quaternary structure, monomer. As to expression, expressed by the salivary gland.

It localises to the secreted. The polypeptide is SE-cephalotoxin (Acanthosepion esculentum (Golden cuttlefish)).